Reading from the N-terminus, the 365-residue chain is Popy Class I histocompatibility antigen, A-1 alpha chain (365 aa).

The signal sequence occupies residues M1 to A24. The interval G25–G114 is alpha-1. Over G25–I308 the chain is Extracellular. A glycan (N-linked (GlcNAc...) asparagine) is linked at N110. The alpha-2 stretch occupies residues G115–T206. 2 disulfides stabilise this stretch: C125–C188 and C227–C283. The interval D207–W298 is alpha-3. One can recognise an Ig-like C1-type domain in the interval P209–R297. The tract at residues E299–I308 is connecting peptide. Residues V309–W332 form a helical membrane-spanning segment. The Cytoplasmic segment spans residues R333–V365. The tract at residues K340 to V365 is disordered. Phosphoserine is present on S343. Positions S343–S359 are enriched in polar residues. Y344 is modified (phosphotyrosine). Residues S345, S349, S352, S356, and S359 each carry the phosphoserine modification.

The protein belongs to the MHC class I family. As to quaternary structure, heterodimer of an alpha chain and a beta chain (beta-2-microglobulin).

It localises to the membrane. Its function is as follows. Involved in the presentation of foreign antigens to the immune system. The sequence is that of Popy Class I histocompatibility antigen, A-1 alpha chain from Pongo pygmaeus (Bornean orangutan).